The following is a 308-amino-acid chain: F420-non-reducing hydrogenase subunit G (308 aa).

It belongs to the [NiFe]/[NiFeSe] hydrogenase small subunit family. The F420-non-reducing hydrogenase is composed of three subunits; MvhA, MvhD and MvhG. It forms a complex with the heterodisulfide reductase (hdr).

In terms of biological role, part of a complex that provides reducing equivalents for heterodisulfide reductase. The protein is F420-non-reducing hydrogenase subunit G (mvhG) of Methanothermobacter marburgensis (strain ATCC BAA-927 / DSM 2133 / JCM 14651 / NBRC 100331 / OCM 82 / Marburg) (Methanobacterium thermoautotrophicum).